The sequence spans 289 residues: Acetyl-coenzyme A carboxylase carboxyl transferase subunit beta (289 aa).

The CoA carboxyltransferase N-terminal domain occupies 28-289 (VMTKCPKCKK…QGGEMAVWQS (262 aa)). Cys32, Cys35, Cys51, and Cys54 together coordinate Zn(2+). A C4-type zinc finger spans residues 32–54 (CPKCKKIMYTKEVLKNLKVCVNC).

It belongs to the AccD/PCCB family. As to quaternary structure, acetyl-CoA carboxylase is a heterohexamer composed of biotin carboxyl carrier protein (AccB), biotin carboxylase (AccC) and two subunits each of ACCase subunit alpha (AccA) and ACCase subunit beta (AccD). Requires Zn(2+) as cofactor.

The protein resides in the cytoplasm. It catalyses the reaction N(6)-carboxybiotinyl-L-lysyl-[protein] + acetyl-CoA = N(6)-biotinyl-L-lysyl-[protein] + malonyl-CoA. Its pathway is lipid metabolism; malonyl-CoA biosynthesis; malonyl-CoA from acetyl-CoA: step 1/1. Functionally, component of the acetyl coenzyme A carboxylase (ACC) complex. Biotin carboxylase (BC) catalyzes the carboxylation of biotin on its carrier protein (BCCP) and then the CO(2) group is transferred by the transcarboxylase to acetyl-CoA to form malonyl-CoA. In Bacillus thuringiensis subsp. konkukian (strain 97-27), this protein is Acetyl-coenzyme A carboxylase carboxyl transferase subunit beta.